Reading from the N-terminus, the 67-residue chain is Large ribosomal subunit protein eL38 (67 aa).

This sequence belongs to the eukaryotic ribosomal protein eL38 family.

The protein is Large ribosomal subunit protein eL38 (rpl38e) of Aeropyrum pernix (strain ATCC 700893 / DSM 11879 / JCM 9820 / NBRC 100138 / K1).